The chain runs to 238 residues: Epoxyqueuosine reductase QueH (238 aa).

Residues C43, C44, C129, and C132 each coordinate [4Fe-4S] cluster. C211 and C213 form a disulfide bridge.

This sequence belongs to the QueH family.

The catalysed reaction is epoxyqueuosine(34) in tRNA + AH2 = queuosine(34) in tRNA + A + H2O. The protein operates within tRNA modification; tRNA-queuosine biosynthesis. Catalyzes the conversion of epoxyqueuosine (oQ) to queuosine (Q), which is a hypermodified base found in the wobble positions of tRNA(Asp), tRNA(Asn), tRNA(His) and tRNA(Tyr). The sequence is that of Epoxyqueuosine reductase QueH from Staphylococcus epidermidis (strain ATCC 12228 / FDA PCI 1200).